The sequence spans 494 residues: MTTTVPVKTKYEAIIGLETHCQLSTQTKIFSNSSTEFGATPNTNIDPICMGMPGVLPVLNEKVLEYAVKAGLALNCEIALYSKFDRKQYFYPDLPKNYQISQYDLPIAEHGWLEIEIVEEDGNATRKKIGITRLHMEEDAGKLVHGGSDRLSGSTYSMVDYNRAGVPLIEIVSEPDIRSGIEAAEYAQELRRIVRYLGVSDGNMQEGSLRCDVNVSVRPVGQKEFGTKVEIKNMNSFSAIQRAIEYEIERQTEAIETGEKIIQETRLWEEASQCTVSMRTKEGSSDYRYFPEPDIPPIEVSTQQLDTWKAELPELPAQKRYLYESKLGLSAYDTRVLTDDFNVAKYFEAAVAAGGNSKQVANWVMGDITAFLKNEKISINDITLKPDNLAELVTIIDDGTISGKIAKDILPELLSKGGSPKELVEKKGLIQISDIKAIEAIIDEVLAAHPEELAKYRGGKTKLKGFFVGQVMKKTQGRADPKMTNQLISKKLEG.

Belongs to the GatB/GatE family. GatB subfamily. As to quaternary structure, heterotrimer of A, B and C subunits.

It catalyses the reaction L-glutamyl-tRNA(Gln) + L-glutamine + ATP + H2O = L-glutaminyl-tRNA(Gln) + L-glutamate + ADP + phosphate + H(+). It carries out the reaction L-aspartyl-tRNA(Asn) + L-glutamine + ATP + H2O = L-asparaginyl-tRNA(Asn) + L-glutamate + ADP + phosphate + 2 H(+). In terms of biological role, allows the formation of correctly charged Asn-tRNA(Asn) or Gln-tRNA(Gln) through the transamidation of misacylated Asp-tRNA(Asn) or Glu-tRNA(Gln) in organisms which lack either or both of asparaginyl-tRNA or glutaminyl-tRNA synthetases. The reaction takes place in the presence of glutamine and ATP through an activated phospho-Asp-tRNA(Asn) or phospho-Glu-tRNA(Gln). The sequence is that of Aspartyl/glutamyl-tRNA(Asn/Gln) amidotransferase subunit B from Trichodesmium erythraeum (strain IMS101).